We begin with the raw amino-acid sequence, 581 residues long: Intermediate filament protein ifa-3 (581 aa).

Positions Met-1–Ser-33 are disordered. A head region spans residues Met-1–Glu-74. A compositionally biased stretch (polar residues) spans Tyr-7–Ser-33. One can recognise an IF rod domain in the interval Glu-71 to Asn-424. The tract at residues Ile-75–Leu-106 is coil 1A. The tract at residues Gln-107 to Met-120 is linker 1. The coil 1B stretch occupies residues Tyr-121–Leu-258. The interval Gln-259–Asn-276 is linker 12. The interval Glu-277–Asn-424 is coil 2. Residues Gly-425–Thr-578 are tail. In terms of domain architecture, LTD spans Ser-457–Gln-574.

The protein belongs to the intermediate filament family. Forms some heteromeric filaments with ifb-1. As to expression, expressed in the embryonic and larval hypodermis. Also expressed in the ventral nerve cord of larvae.

The protein resides in the cytoplasm. Its function is as follows. Cytoplasmic intermediate filaments provide mechanical strength to cells. Essential protein, involved in attachment structures in epidermal cells that connect muscles to the external cuticle. Required for epidermal morphogenesis in embryos. Probable component of embryonic epidermal attachment structures. In Caenorhabditis elegans, this protein is Intermediate filament protein ifa-3 (ifa-3).